A 493-amino-acid chain; its full sequence is Cysteine--tRNA ligase (493 aa).

Residue C29 coordinates Zn(2+). The 'HIGH' region signature appears at 31–41 (VTVYDLCHLGH). Residues C213, H238, and E242 each contribute to the Zn(2+) site. Positions 270 to 274 (KMSKS) match the 'KMSKS' region motif. ATP is bound at residue K273.

This sequence belongs to the class-I aminoacyl-tRNA synthetase family. As to quaternary structure, monomer. Zn(2+) serves as cofactor.

The protein localises to the cytoplasm. The enzyme catalyses tRNA(Cys) + L-cysteine + ATP = L-cysteinyl-tRNA(Cys) + AMP + diphosphate. The chain is Cysteine--tRNA ligase from Parasynechococcus marenigrum (strain WH8102).